Here is a 515-residue protein sequence, read N- to C-terminus: Aldehyde dehydrogenase tropH (515 aa).

238–243 (GSVATG) serves as a coordination point for NAD(+). E260 functions as the Proton acceptor in the catalytic mechanism. The active-site Nucleophile is the C295.

This sequence belongs to the aldehyde dehydrogenase family.

It catalyses the reaction an aldehyde + NAD(+) + H2O = a carboxylate + NADH + 2 H(+). Its pathway is secondary metabolite biosynthesis. Functionally, aldehyde dehydrogenase; part of the gene cluster that mediates the biosynthesis of the tropolone class of fungal maleic anhydrides. The pathway begins with the synthesis of 3-methylorcinaldehyde by the non-reducing polyketide synthase (PKS) tropA. 3-methylorcinaldehyde is the substrate for the FAD-dependent monooxygenase tropB to yield a dearomatized hydroxycyclohexadione. The 2-oxoglutarate-dependent dioxygenase tropC then performs the oxidative ring expansion to provide the first tropolone metabolite stipitaldehyde. Trop D converts stipitaldehyde into stipitacetal which is in turn converted to stipitalide by the short-chain dehydrogenase/reductase tropE. The next steps involve tropF, tropG, tropH, tropI and tropJ to form successive tropolone maleic anhydrides including stipitaldehydic, stipitatonic and stipitatic acids. In Talaromyces stipitatus (strain ATCC 10500 / CBS 375.48 / QM 6759 / NRRL 1006) (Penicillium stipitatum), this protein is Aldehyde dehydrogenase tropH.